The chain runs to 332 residues: Holliday junction branch migration complex subunit RuvB (332 aa).

The segment at 1 to 181 (MARILDNNVM…FGITGHMEYY (181 aa)) is large ATPase domain (RuvB-L). Residues L20, R21, G62, K65, T66, T67, 128–130 (EDF), R171, Y181, and R218 each bind ATP. Mg(2+) is bound at residue T66. A small ATPAse domain (RuvB-S) region spans residues 182-252 (QEKDLTEIVE…ITDRALTMLD (71 aa)). The tract at residues 255-332 (REGLDYIDQK…RHLGYPYQNT (78 aa)) is head domain (RuvB-H). DNA-binding residues include R291, R310, R312, and R315.

Belongs to the RuvB family. In terms of assembly, homohexamer. Forms an RuvA(8)-RuvB(12)-Holliday junction (HJ) complex. HJ DNA is sandwiched between 2 RuvA tetramers; dsDNA enters through RuvA and exits via RuvB. An RuvB hexamer assembles on each DNA strand where it exits the tetramer. Each RuvB hexamer is contacted by two RuvA subunits (via domain III) on 2 adjacent RuvB subunits; this complex drives branch migration. In the full resolvosome a probable DNA-RuvA(4)-RuvB(12)-RuvC(2) complex forms which resolves the HJ.

It localises to the cytoplasm. The enzyme catalyses ATP + H2O = ADP + phosphate + H(+). In terms of biological role, the RuvA-RuvB-RuvC complex processes Holliday junction (HJ) DNA during genetic recombination and DNA repair, while the RuvA-RuvB complex plays an important role in the rescue of blocked DNA replication forks via replication fork reversal (RFR). RuvA specifically binds to HJ cruciform DNA, conferring on it an open structure. The RuvB hexamer acts as an ATP-dependent pump, pulling dsDNA into and through the RuvAB complex. RuvB forms 2 homohexamers on either side of HJ DNA bound by 1 or 2 RuvA tetramers; 4 subunits per hexamer contact DNA at a time. Coordinated motions by a converter formed by DNA-disengaged RuvB subunits stimulates ATP hydrolysis and nucleotide exchange. Immobilization of the converter enables RuvB to convert the ATP-contained energy into a lever motion, pulling 2 nucleotides of DNA out of the RuvA tetramer per ATP hydrolyzed, thus driving DNA branch migration. The RuvB motors rotate together with the DNA substrate, which together with the progressing nucleotide cycle form the mechanistic basis for DNA recombination by continuous HJ branch migration. Branch migration allows RuvC to scan DNA until it finds its consensus sequence, where it cleaves and resolves cruciform DNA. This chain is Holliday junction branch migration complex subunit RuvB, found in Streptococcus pyogenes serotype M1.